The sequence spans 540 residues: Light-independent protochlorophyllide reductase subunit B (540 aa).

A [4Fe-4S] cluster-binding site is contributed by aspartate 36. Aspartate 287 functions as the Proton donor in the catalytic mechanism. A substrate-binding site is contributed by 422 to 423 (GL).

Belongs to the ChlB/BchB/BchZ family. In terms of assembly, protochlorophyllide reductase is composed of three subunits; BchL, BchN and BchB. Forms a heterotetramer of two BchB and two BchN subunits. [4Fe-4S] cluster serves as cofactor.

It catalyses the reaction chlorophyllide a + oxidized 2[4Fe-4S]-[ferredoxin] + 2 ADP + 2 phosphate = protochlorophyllide a + reduced 2[4Fe-4S]-[ferredoxin] + 2 ATP + 2 H2O. It functions in the pathway porphyrin-containing compound metabolism; bacteriochlorophyll biosynthesis (light-independent). In terms of biological role, component of the dark-operative protochlorophyllide reductase (DPOR) that uses Mg-ATP and reduced ferredoxin to reduce ring D of protochlorophyllide (Pchlide) to form chlorophyllide a (Chlide). This reaction is light-independent. The NB-protein (BchN-BchB) is the catalytic component of the complex. The polypeptide is Light-independent protochlorophyllide reductase subunit B (Rhodopseudomonas palustris (strain TIE-1)).